An 807-amino-acid chain; its full sequence is DNA gyrase subunit B (807 aa).

Positions 429-543 (SELFIVEGDS…KGYLYIAQPP (115 aa)) constitute a Toprim domain. Mg(2+) contacts are provided by Glu435, Asp508, and Asp510.

The protein belongs to the type II topoisomerase GyrB family. Heterotetramer, composed of two GyrA and two GyrB chains. In the heterotetramer, GyrA contains the active site tyrosine that forms a transient covalent intermediate with DNA, while GyrB binds cofactors and catalyzes ATP hydrolysis. It depends on Mg(2+) as a cofactor. The cofactor is Mn(2+). Ca(2+) serves as cofactor.

It localises to the cytoplasm. The catalysed reaction is ATP-dependent breakage, passage and rejoining of double-stranded DNA.. A type II topoisomerase that negatively supercoils closed circular double-stranded (ds) DNA in an ATP-dependent manner to modulate DNA topology and maintain chromosomes in an underwound state. Negative supercoiling favors strand separation, and DNA replication, transcription, recombination and repair, all of which involve strand separation. Also able to catalyze the interconversion of other topological isomers of dsDNA rings, including catenanes and knotted rings. Type II topoisomerases break and join 2 DNA strands simultaneously in an ATP-dependent manner. The protein is DNA gyrase subunit B of Rickettsia prowazekii (strain Madrid E).